The primary structure comprises 521 residues: Zinc finger CCCH domain-containing protein 45 (521 aa).

Disordered regions lie at residues 28–60, 142–185, and 296–319; these read TEDS…GFEG, TPAI…PLCS, and SRSF…ISPP. Polar residues predominate over residues 34–43; the sequence is NVASQPQRHS. Low complexity predominate over residues 159 to 168; that stretch reads EESSNSKVES. Residues 170 to 185 are compositionally biased toward polar residues; it reads VTANKQGQLETKPLCS. The segment at 469-497 adopts a C3H1-type zinc-finger fold; that stretch reads NKIHQQCIYFGTANGCNMGDSCTYVHDRY.

This Arabidopsis thaliana (Mouse-ear cress) protein is Zinc finger CCCH domain-containing protein 45.